The sequence spans 399 residues: uncharacterized protein (399 aa).

Positions 254 to 335 (SRVSTGDTSP…FFRDSDDDGD (82 aa)) are disordered. The span at 255 to 264 (RVSTGDTSPY) shows a compositional bias: polar residues. Basic and acidic residues predominate over residues 310–329 (RNAEMKKSHSANDSEEFFRD).

This is an uncharacterized protein from Xenopus laevis (African clawed frog).